Reading from the N-terminus, the 414-residue chain is Tyrosine--tRNA ligase (414 aa).

L-tyrosine is bound at residue Tyr40. The 'HIGH' region signature appears at Ala45–His54. Residues Tyr175 and Gln179 each contribute to the L-tyrosine site. A 'KMSKS' region motif is present at residues Lys235–Ser239. Lys238 is an ATP binding site. Positions Leu349–Gly414 constitute an S4 RNA-binding domain.

This sequence belongs to the class-I aminoacyl-tRNA synthetase family. TyrS type 1 subfamily. As to quaternary structure, homodimer.

Its subcellular location is the cytoplasm. It catalyses the reaction tRNA(Tyr) + L-tyrosine + ATP = L-tyrosyl-tRNA(Tyr) + AMP + diphosphate + H(+). Catalyzes the attachment of tyrosine to tRNA(Tyr) in a two-step reaction: tyrosine is first activated by ATP to form Tyr-AMP and then transferred to the acceptor end of tRNA(Tyr). This is Tyrosine--tRNA ligase from Paracoccus denitrificans (strain Pd 1222).